The chain runs to 223 residues: Cytidylate kinase (223 aa).

10-18 is a binding site for ATP; sequence GPASSGKST.

The protein belongs to the cytidylate kinase family. Type 1 subfamily.

Its subcellular location is the cytoplasm. The enzyme catalyses CMP + ATP = CDP + ADP. It carries out the reaction dCMP + ATP = dCDP + ADP. The protein is Cytidylate kinase of Streptococcus pneumoniae (strain Taiwan19F-14).